Here is a 334-residue protein sequence, read N- to C-terminus: N-acetylmuramate/N-acetylglucosamine kinase (334 aa).

This sequence belongs to the kinase AmgK family.

The catalysed reaction is N-acetyl-D-muramate + ATP = N-acetyl-alpha-D-muramate 1-phosphate + ADP + H(+). It catalyses the reaction N-acetyl-D-glucosamine + ATP = N-acetyl-alpha-D-glucosamine 1-phosphate + ADP + H(+). It functions in the pathway cell wall biogenesis; peptidoglycan recycling. Functionally, sugar kinase that catalyzes the ATP-dependent phosphorylation of N-acetylmuramate (MurNAc) and N-acetylglucosamine (GlcNAc) at its C1 hydroxyl group, leading to MurNAc alpha-1P and GlcNAc alpha-1P, respectively. Is likely involved in peptidoglycan recycling as part of a cell wall recycling pathway that bypasses de novo biosynthesis of the peptidoglycan precursor UDP-MurNAc. Is able to complement the fosfomycin sensitivity phenotype of a P.putida mutant lacking amgK. This chain is N-acetylmuramate/N-acetylglucosamine kinase, found in Neisseria meningitidis serogroup B (strain ATCC BAA-335 / MC58).